Here is a 212-residue protein sequence, read N- to C-terminus: uncharacterized protein (212 aa).

Residues 11 to 31 (NLIFFQFIVYFFFISLTILII) form a helical membrane-spanning segment.

It localises to the membrane. This is an uncharacterized protein from Rickettsia prowazekii (strain Madrid E).